Here is a 548-residue protein sequence, read N- to C-terminus: Membrane protein insertase YidC (548 aa).

A helical transmembrane segment spans residues 6-26 (NLLIIALLFVSFMIWQAWEQD). Residues 28–52 (NPQPQQQTTQTTTTAAGSAADQGVP) form a disordered region. Low complexity predominate over residues 29–41 (PQPQQQTTQTTTT). The next 4 helical transmembrane spans lie at 345 to 365 (KFIH…TFIV), 420 to 440 (LGGC…YYML), 458 to 478 (LSAQ…MFFI), and 499 to 519 (PVIF…YYIV).

It belongs to the OXA1/ALB3/YidC family. Type 1 subfamily. As to quaternary structure, interacts with the Sec translocase complex via SecD. Specifically interacts with transmembrane segments of nascent integral membrane proteins during membrane integration.

Its subcellular location is the cell inner membrane. Functionally, required for the insertion and/or proper folding and/or complex formation of integral membrane proteins into the membrane. Involved in integration of membrane proteins that insert both dependently and independently of the Sec translocase complex, as well as at least some lipoproteins. Aids folding of multispanning membrane proteins. The polypeptide is Membrane protein insertase YidC (Klebsiella pneumoniae subsp. pneumoniae (strain ATCC 700721 / MGH 78578)).